A 421-amino-acid chain; its full sequence is Histidine--tRNA ligase (421 aa).

Belongs to the class-II aminoacyl-tRNA synthetase family.

It is found in the cytoplasm. It carries out the reaction tRNA(His) + L-histidine + ATP = L-histidyl-tRNA(His) + AMP + diphosphate + H(+). The polypeptide is Histidine--tRNA ligase (Pyrobaculum islandicum (strain DSM 4184 / JCM 9189 / GEO3)).